We begin with the raw amino-acid sequence, 472 residues long: Karilysin (472 aa).

Residues 1–20 form the signal peptide; it reads MKRFILLFFLSTIAIFKVYS. The propeptide at 21–34 is activation peptide; it reads QRLYDNGPLTGDNN. Zn(2+) is bound by residues His-102, Asp-104, His-117, His-133, and His-155. The active-site Proton donor/acceptor is the Glu-156. His-159 and His-165 together coordinate Zn(2+). Positions 196–386 are cleaved as a propeptide — removed in short form; sequence YGYPFSISGP…AVSCSRTISP (191 aa). Positions 387–472 are cleaved as a propeptide — removed in long form; sequence FTLSPNPATD…QTYTQKLIKK (86 aa).

Belongs to the peptidase M10A family. Zn(2+) serves as cofactor. In terms of processing, processes itself into the mature 18-kDa enzyme (Kly18) through sequential autoproteolytic cleavage at both the N- and C-termini. However, the maturation intermediate Kly38 is found to be more active than Kly18 and the rate for its processing is slow, which raises the question as to whether Kly38 is a physiologically relevant entity.

Its subcellular location is the secreted. Autoprocessing and proteolytic activity are completely inhibited by EDTA and 1,10-phenanthroline in vitro. Proteolytic activity is 3-fold enhanced by Ca(2+) due to stabilization of the protein structure but inhibited by an excess of Zn(2+). Inhibitory studies of karilysin identified several phage display-selected peptides with apparent inhibition constants (Ki) in the micromolar range, among which is the tetrapeptide SWFP (Ki=10.7 uM). In terms of biological role, metalloprotease able to cleave casein, gelatin, elastin, fibrinogen and fibronectin. Shows exclusive preference for hydrophobic residues, especially Leu, Tyr and Met, at the P1' position of substrates, and for Pro or Ala at P3. Can efficiently cleave the antimicrobial peptide LL-37 which is a component of the immune system, leading to a significant reduction of its bactericidal activity. Is also able to inhibit all pathways of the human complement system. The classical and lectin complement pathways are inhibited because of the efficient degradation of mannose-binding lectin, ficolin-2, ficolin-3, and C4 by karilysin, whereas inhibition of the terminal pathway is caused by cleavage of C5. Thus, karilysin appears to be a major virulence factor of T.forsythia that contributes to evasion of the human immune response and periodontal disease. Seems to act synergistically with gingipains from the periodontal pathogen P.gingivalis present at the same sites of infection. This Tannerella forsythia (strain ATCC 43037 / JCM 10827 / CCUG 21028 A / KCTC 5666 / FDC 338) (Bacteroides forsythus) protein is Karilysin (kly).